A 98-amino-acid polypeptide reads, in one-letter code: Envelope glycoprotein N (98 aa).

The N-terminal stretch at 1–24 is a signal peptide; the sequence is MVSSAGLSLTLVAALCALVAPALS. Residues 25–60 lie on the Virion surface side of the membrane; it reads SIVSTEGPLPLLREESRINFWNAACAARGVPVDQPT. A helical transmembrane segment spans residues 61–81; sequence AAAVTFYICLLAVLVVALGYA. The Intravirion segment spans residues 82–98; the sequence is TRTCTRMLHASPAGRRV.

The protein belongs to the herpesviridae glycoprotein N family. As to quaternary structure, interacts (via N-terminus) with gM (via N-terminus). The gM-gN heterodimer forms the gCII complex. O-glycosylated.

It localises to the virion membrane. Its subcellular location is the host membrane. It is found in the host Golgi apparatus. The protein resides in the host trans-Golgi network. Its function is as follows. Envelope glycoprotein necessary for proper maturation of gM and modulation of its membrane fusion activity. Also plays a critical role in virion morphogenesis. The sequence is that of Envelope glycoprotein N from Suid herpesvirus 1 (SuHV-1).